The chain runs to 263 residues: L-aspartate dehydrogenase (263 aa).

NAD(+) contacts are provided by A120 and N186. H216 is an active-site residue.

It belongs to the L-aspartate dehydrogenase family.

It carries out the reaction L-aspartate + NADP(+) + H2O = oxaloacetate + NH4(+) + NADPH + H(+). The enzyme catalyses L-aspartate + NAD(+) + H2O = oxaloacetate + NH4(+) + NADH + H(+). It functions in the pathway cofactor biosynthesis; NAD(+) biosynthesis; iminoaspartate from L-aspartate (dehydrogenase route): step 1/1. Specifically catalyzes the NAD or NADP-dependent dehydrogenation of L-aspartate to iminoaspartate. This Acinetobacter baumannii (strain AB307-0294) protein is L-aspartate dehydrogenase.